The chain runs to 568 residues: Putative ABC transporter ATP-binding protein EF_2153 (568 aa).

2 consecutive ABC transporter domains span residues 6 to 247 (ITFN…GIRE) and 301 to 535 (LRLE…ASLK). Residues 40 to 47 (GPSGSGKS) and 335 to 342 (GKNGAGKS) contribute to the ATP site.

Belongs to the ABC transporter superfamily.

It is found in the cell membrane. In terms of biological role, probably part of an ABC transporter complex. Responsible for energy coupling to the transport system. This chain is Putative ABC transporter ATP-binding protein EF_2153, found in Enterococcus faecalis (strain ATCC 700802 / V583).